Reading from the N-terminus, the 642-residue chain is Bifunctional protein glk (642 aa).

A glucokinase region spans residues 1–340 (MSTGAQSKAA…QLSNRSGGAS (340 aa)). 23–28 (ADVGGT) contacts ATP. An HTH rpiR-type domain is found at 341-417 (SAVFERIRQM…LKLATGLTGT (77 aa)). The putative HTH-type transcriptional regulator stretch occupies residues 341–642 (SAVFERIRQM…SPAAKDVARD (302 aa)). Residues 377–396 (IVDIARKADVSQPTVIRFCR) constitute a DNA-binding region (H-T-H motif). Residues 461-600 (AIEILNGARR…AVGVAIRRAS (140 aa)) enclose the SIS domain. The chain crosses the membrane as a helical span at residues 576–596 (SMISRILHLLMIDILAVGVAI).

It in the N-terminal section; belongs to the bacterial glucokinase family.

It localises to the membrane. The enzyme catalyses D-glucose + ATP = D-glucose 6-phosphate + ADP + H(+). This Burkholderia lata (strain ATCC 17760 / DSM 23089 / LMG 22485 / NCIMB 9086 / R18194 / 383) protein is Bifunctional protein glk (glk).